Consider the following 370-residue polypeptide: Probable neutral protease 2 homolog ARB_03949 (370 aa).

The N-terminal stretch at 1 to 19 (MQLVAALAALGALVAPAVA) is a signal peptide. Residues 20-188 (YPHAPMNETL…SIHSRALQKR (169 aa)) constitute a propeptide that is removed on maturation. 2 disulfide bridges follow: cysteine 196–cysteine 267 and cysteine 274–cysteine 292. Position 316 (histidine 316) interacts with Zn(2+). Residue glutamate 317 is part of the active site. Residues histidine 320 and aspartate 331 each contribute to the Zn(2+) site.

The protein belongs to the peptidase M35 family. The cofactor is Zn(2+).

The protein resides in the secreted. It catalyses the reaction Preferential cleavage of bonds with hydrophobic residues in P1'. Also 3-Asn-|-Gln-4 and 8-Gly-|-Ser-9 bonds in insulin B chain.. Functionally, probable secreted metalloprotease that shows high activities on basic nuclear substrates such as histone and protamine. May be involved in virulence. This chain is Probable neutral protease 2 homolog ARB_03949, found in Arthroderma benhamiae (strain ATCC MYA-4681 / CBS 112371) (Trichophyton mentagrophytes).